Consider the following 333-residue polypeptide: NADH dehydrogenase (ubiquinone) complex I, assembly factor 6 (333 aa).

A mitochondrion-targeting transit peptide spans 1–44 (MAASAHGSVWGPLRLGIPGLCCRRPPLGLYARMRRLPGPEVSGR).

The protein belongs to the NDUFAF6 family. Widely expressed. A lower expression is observed in lung and kidney compared to heart, muscle and liver. In the kidney, expression is high in the basal zone of the proximal tubular cells.

It localises to the mitochondrion inner membrane. The protein localises to the cytoplasm. The protein resides in the nucleus. Its function is as follows. Involved in the assembly of mitochondrial NADH:ubiquinone oxidoreductase complex (complex I) at early stages. May play a role in the biogenesis of complex I subunit MT-ND1. This chain is NADH dehydrogenase (ubiquinone) complex I, assembly factor 6 (NDUFAF6), found in Homo sapiens (Human).